The sequence spans 836 residues: Protein PDC2 (836 aa).

The HTH CENPB-type domain occupies 64–139 (ELIRRRKRAN…VKKLNINITG (76 aa)). Residues 626–640 (TTSTSVVSDSPSGTT) show a composition bias toward low complexity. The interval 626–732 (TTSTSVVSDS…NVQFGNGAGS (107 aa)) is disordered. The span at 641 to 651 (QKYNNISTYPN) shows a compositional bias: polar residues. A compositionally biased stretch (low complexity) spans 677-698 (GQELQNPQGQQQQEQQQQQQHQ). The segment covering 699-711 (MSGYNFSPISNIE) has biased composition (polar residues).

In terms of biological role, essential for the synthesis of pyruvate decarboxylase. This is Protein PDC2 (PDC2) from Candida albicans (Yeast).